The following is a 402-amino-acid chain: UPF0261 protein mll9388 (402 aa).

It belongs to the UPF0261 family.

The protein is UPF0261 protein mll9388 of Mesorhizobium japonicum (strain LMG 29417 / CECT 9101 / MAFF 303099) (Mesorhizobium loti (strain MAFF 303099)).